Here is a 539-residue protein sequence, read N- to C-terminus: Acrosin-binding protein (539 aa).

An N-terminal signal peptide occupies residues 1–25 (MRQLAAGSLLSLLKVLLLPLAPAPA). Residues 26–106 (QDANSASTPG…ASWFESFCQF (81 aa)) form a pro-ACR binding region. The propeptide at 26 to 269 (QDANSASTPG…NPFSFTPRVR (244 aa)) is removed in active form. A disordered region spans residues 186–259 (LGGQEQGQEH…PKFQSEFVSS (74 aa)). Positions 192 to 211 (GQEHKQEHKQEQGQEHKQDE) are enriched in basic and acidic residues. Positions 212-238 (GQEQEEQEEEQEEEGKQEEGQGTEESL) are enriched in acidic residues. A pro-ACR binding region spans residues 315–423 (LPHVDALLVL…TQIGTLKSGR (109 aa)).

As to quaternary structure, binds specifically to the 55- and 53-kDa proacrosins and the 49-kDa acrosin intermediate, but is not capable of binding 43-kDa acrosin intermediate and 32-kDa mature acrosin. Post-translationally, the N-terminus is blocked. In terms of processing, synthesized as a 60-kDa precursor, the 35-kDa mature form is post-translationally produced by the removal of the N-terminal half of the precursor during sperm maturation in the testis and/or epididymis. Phosphorylated on Tyr residues in capacitated sperm. As to expression, specifically expressed in testis.

It localises to the secreted. Its subcellular location is the cytoplasmic vesicle. It is found in the secretory vesicle. The protein localises to the acrosome. Its function is as follows. Acrosomal protein that maintains proacrosin (pro-ACR) as an enzymatically inactive zymogen in the acrosome. Involved also in the acrosome formation. This chain is Acrosin-binding protein, found in Sus scrofa (Pig).